The chain runs to 283 residues: Pantothenate synthetase (283 aa).

30–37 (MGALHEGH) serves as a coordination point for ATP. The active-site Proton donor is His37. (R)-pantoate is bound at residue Gln61. Residue Gln61 coordinates beta-alanine. ATP is bound at residue 147–150 (GMKD). Gln153 serves as a coordination point for (R)-pantoate. Residues Val176 and 184–187 (LSSR) each bind ATP.

This sequence belongs to the pantothenate synthetase family. In terms of assembly, homodimer.

Its subcellular location is the cytoplasm. It carries out the reaction (R)-pantoate + beta-alanine + ATP = (R)-pantothenate + AMP + diphosphate + H(+). The protein operates within cofactor biosynthesis; (R)-pantothenate biosynthesis; (R)-pantothenate from (R)-pantoate and beta-alanine: step 1/1. Functionally, catalyzes the condensation of pantoate with beta-alanine in an ATP-dependent reaction via a pantoyl-adenylate intermediate. In Endomicrobium trichonymphae, this protein is Pantothenate synthetase.